The following is a 318-amino-acid chain: Large ribosomal subunit protein uL10 (318 aa).

Phosphotyrosine is present on Tyr24. Position 59 is a phosphothreonine (Thr59). Lys264 is covalently cross-linked (Glycyl lysine isopeptide (Lys-Gly) (interchain with G-Cter in ubiquitin)). The tract at residues 293–318 (TAAPAKVEAKEESEESDEDMGFGLFD) is disordered. A Glycyl lysine isopeptide (Lys-Gly) (interchain with G-Cter in SUMO1); alternate cross-link involves residue Lys298. Residue Lys298 forms a Glycyl lysine isopeptide (Lys-Gly) (interchain with G-Cter in SUMO2); alternate linkage. Positions 303–312 (EESEESDEDM) are enriched in acidic residues. 2 positions are modified to phosphoserine: Ser305 and Ser308.

Belongs to the universal ribosomal protein uL10 family. In terms of assembly, P0 forms a pentameric complex by interaction with dimers of P1 and P2. Identified in a IGF2BP1-dependent mRNP granule complex containing untranslated mRNAs. Interacts with APEX1. Interacts with FMR1. Ubiquitinated at Lys-264 by RNF14 and RNF25 in response to ribosome collisions (ribosome stalling).

Its subcellular location is the nucleus. It is found in the cytoplasm. Its function is as follows. Ribosomal protein P0 is the functional equivalent of E.coli protein L10. The polypeptide is Large ribosomal subunit protein uL10 (RPLP0) (Bos taurus (Bovine)).